We begin with the raw amino-acid sequence, 337 residues long: Glycerol-3-phosphate dehydrogenase [NAD(P)+] (337 aa).

NADPH-binding residues include tryptophan 12 and lysine 107. 3 residues coordinate sn-glycerol 3-phosphate: lysine 107, glycine 138, and threonine 140. Alanine 142 serves as a coordination point for NADPH. Positions 193, 246, 256, 257, and 258 each coordinate sn-glycerol 3-phosphate. Lysine 193 serves as the catalytic Proton acceptor. Arginine 257 contributes to the NADPH binding site. Residues valine 282 and glutamate 284 each contribute to the NADPH site.

This sequence belongs to the NAD-dependent glycerol-3-phosphate dehydrogenase family.

It localises to the cytoplasm. The enzyme catalyses sn-glycerol 3-phosphate + NAD(+) = dihydroxyacetone phosphate + NADH + H(+). It carries out the reaction sn-glycerol 3-phosphate + NADP(+) = dihydroxyacetone phosphate + NADPH + H(+). The protein operates within membrane lipid metabolism; glycerophospholipid metabolism. In terms of biological role, catalyzes the reduction of the glycolytic intermediate dihydroxyacetone phosphate (DHAP) to sn-glycerol 3-phosphate (G3P), the key precursor for phospholipid synthesis. This is Glycerol-3-phosphate dehydrogenase [NAD(P)+] from Koribacter versatilis (strain Ellin345).